We begin with the raw amino-acid sequence, 274 residues long: Bis(5'-nucleosyl)-tetraphosphatase, symmetrical (274 aa).

This sequence belongs to the Ap4A hydrolase family.

The catalysed reaction is P(1),P(4)-bis(5'-adenosyl) tetraphosphate + H2O = 2 ADP + 2 H(+). Functionally, hydrolyzes diadenosine 5',5'''-P1,P4-tetraphosphate to yield ADP. This Shewanella sp. (strain ANA-3) protein is Bis(5'-nucleosyl)-tetraphosphatase, symmetrical.